A 2286-amino-acid polypeptide reads, in one-letter code: DNA polymerase epsilon catalytic subunit A (2286 aa).

Residues 1–30 form a disordered region; it reads MSLRSGGRRRADPGADGEASRDDGATSSVS. Positions 9 to 24 are enriched in basic and acidic residues; sequence RRADPGADGEASRDDG. 4 positions are modified to phosphoserine: serine 1184, serine 1297, serine 1317, and serine 1940. A disordered region spans residues 1939 to 1969; sequence DSQKAGGAEDEQENEDDEEERDGEEEEEAEE. The span at 1946 to 1969 shows a compositional bias: acidic residues; sequence AEDEQENEDDEEERDGEEEEEAEE. Positions 2158, 2161, 2187, and 2190 each coordinate Zn(2+). Residues 2158–2190 form a CysA-type zinc finger; the sequence is CRSCNFCRDLDLCKDSSFSEDGAVLPQWLCSNC. [4Fe-4S] cluster is bound by residues cysteine 2221, cysteine 2224, cysteine 2236, and cysteine 2238. The CysB motif signature appears at 2221–2238; the sequence is CLKCRGVKETSMPVYCSC.

It belongs to the DNA polymerase type-B family. As to quaternary structure, component of the DNA polymerase epsilon complex consisting of four subunits: the catalytic subunit POLE and the accessory subunits POLE2, POLE3 and POLE4. Interacts with RAD17 and TOPBP1.

The protein localises to the nucleus. It catalyses the reaction DNA(n) + a 2'-deoxyribonucleoside 5'-triphosphate = DNA(n+1) + diphosphate. Its function is as follows. Catalytic component of the DNA polymerase epsilon complex. Participates in chromosomal DNA replication. Required during synthesis of the leading DNA strands at the replication fork, binds at/or near replication origins and moves along DNA with the replication fork. Has 3'-5' proofreading exonuclease activity that corrects errors arising during DNA replication. Involved in DNA synthesis during DNA repair. Along with DNA polymerase POLD1 and DNA polymerase POLK, has a role in excision repair (NER) synthesis following UV irradiation. The sequence is that of DNA polymerase epsilon catalytic subunit A from Homo sapiens (Human).